The sequence spans 316 residues: L-lactate dehydrogenase 3 (316 aa).

4 residues coordinate NAD(+): valine 16, aspartate 37, arginine 42, and tyrosine 68. Arginine 91 is a substrate binding site. NAD(+)-binding positions include serine 104, 121–123 (ASN), and threonine 146. 123–126 (NPVD) lines the substrate pocket. Residue 151 to 154 (DSSR) coordinates substrate. The beta-D-fructose 1,6-bisphosphate site is built by arginine 156 and histidine 171. Histidine 178 acts as the Proton acceptor in catalysis. Residue threonine 233 coordinates substrate.

This sequence belongs to the LDH/MDH superfamily. LDH family. In terms of assembly, homotetramer.

Its subcellular location is the cytoplasm. The catalysed reaction is (S)-lactate + NAD(+) = pyruvate + NADH + H(+). Its pathway is fermentation; pyruvate fermentation to lactate; (S)-lactate from pyruvate: step 1/1. Its activity is regulated as follows. Allosterically activated by fructose 1,6-bisphosphate (FBP). Its function is as follows. Catalyzes the conversion of lactate to pyruvate. In Bacillus cereus (strain ATCC 10987 / NRS 248), this protein is L-lactate dehydrogenase 3.